Consider the following 397-residue polypeptide: Tryptophan synthase beta chain (397 aa).

Position 88 is an N6-(pyridoxal phosphate)lysine (lysine 88).

This sequence belongs to the TrpB family. In terms of assembly, tetramer of two alpha and two beta chains. Pyridoxal 5'-phosphate serves as cofactor.

The enzyme catalyses (1S,2R)-1-C-(indol-3-yl)glycerol 3-phosphate + L-serine = D-glyceraldehyde 3-phosphate + L-tryptophan + H2O. The protein operates within amino-acid biosynthesis; L-tryptophan biosynthesis; L-tryptophan from chorismate: step 5/5. The beta subunit is responsible for the synthesis of L-tryptophan from indole and L-serine. This is Tryptophan synthase beta chain from Haemophilus influenzae (strain PittEE).